Reading from the N-terminus, the 386-residue chain is Cell division protein FtsZ (386 aa).

GTP is bound by residues 18–22 (GGGVN), 105–107 (GTG), Glu136, Arg140, and Asp184.

The protein belongs to the FtsZ family. Homodimer. Polymerizes to form a dynamic ring structure in a strictly GTP-dependent manner. Interacts directly with several other division proteins.

The protein localises to the cytoplasm. Functionally, essential cell division protein that forms a contractile ring structure (Z ring) at the future cell division site. The regulation of the ring assembly controls the timing and the location of cell division. One of the functions of the FtsZ ring is to recruit other cell division proteins to the septum to produce a new cell wall between the dividing cells. Binds GTP and shows GTPase activity. The sequence is that of Cell division protein FtsZ from Mycobacterium kansasii.